Reading from the N-terminus, the 236-residue chain is 2-C-methyl-D-erythritol 4-phosphate cytidylyltransferase (236 aa).

It belongs to the IspD/TarI cytidylyltransferase family. IspD subfamily.

It catalyses the reaction 2-C-methyl-D-erythritol 4-phosphate + CTP + H(+) = 4-CDP-2-C-methyl-D-erythritol + diphosphate. It functions in the pathway isoprenoid biosynthesis; isopentenyl diphosphate biosynthesis via DXP pathway; isopentenyl diphosphate from 1-deoxy-D-xylulose 5-phosphate: step 2/6. Catalyzes the formation of 4-diphosphocytidyl-2-C-methyl-D-erythritol from CTP and 2-C-methyl-D-erythritol 4-phosphate (MEP). The sequence is that of 2-C-methyl-D-erythritol 4-phosphate cytidylyltransferase from Symbiobacterium thermophilum (strain DSM 24528 / JCM 14929 / IAM 14863 / T).